A 94-amino-acid polypeptide reads, in one-letter code: MTVLTDEQVDAALLDLNDWKHTDGALCRSIKFPTFLAGIDAVCRVAEHAETKDHHPDIDIRYRTVTFILVTHYADGITKKDITMARDIDRLIGD.

This sequence belongs to the pterin-4-alpha-carbinolamine dehydratase family.

It catalyses the reaction (4aS,6R)-4a-hydroxy-L-erythro-5,6,7,8-tetrahydrobiopterin = (6R)-L-erythro-6,7-dihydrobiopterin + H2O. The sequence is that of Putative pterin-4-alpha-carbinolamine dehydratase from Mycobacterium leprae (strain Br4923).